A 20-amino-acid polypeptide reads, in one-letter code: Brevinin-1DYa (20 aa).

Cysteine 14 and cysteine 20 are disulfide-bonded.

In terms of tissue distribution, expressed by the skin glands.

It is found in the secreted. Its function is as follows. Antimicrobial peptide. Has low activity against the Gram-positive bacterium S.aureus and the Gram-negative bacterium E.coli (MIC&lt;15 uM). Has a strong hemolytic activity. This chain is Brevinin-1DYa, found in Rana dybowskii (Dybovsky's frog).